The following is a 112-amino-acid chain: MGLKEYLFGFKGENMAAKYLVSQGFEILEKNFHSKFGEIDIIAKKDDVLHFVEVKSTSKDYETIYRVTQNKIYKIIKTINFYMLKYDFDLNYQIDIICIEQNKVKFIQNVSF.

Belongs to the UPF0102 family.

This is UPF0102 protein CFF8240_0294 from Campylobacter fetus subsp. fetus (strain 82-40).